A 63-amino-acid polypeptide reads, in one-letter code: Arabinogalactan peptide 3 (63 aa).

The N-terminal stretch at 1–26 (MASRILYAAAVVAAVAVSSLAGVAYA) is a signal peptide. Residue serine 36 is the site of GPI-anchor amidated serine attachment. A propeptide spans 37–63 (GAAAVSSSLVAAVLCPAVALLLGNLRQ) (removed in mature form).

Belongs to the AG-peptide AGP family. O-glycosylated on hydroxyprolines; noncontiguous hydroxylproline residues are glycosylated with arabinogalactan. Expressed in roots, stems, leaves, flowers and seeds.

Its subcellular location is the vacuole. It is found in the aleurone grain membrane. Its function is as follows. Proteoglycan that seems to be implicated in diverse developmental roles such as differentiation, cell-cell recognition, embryogenesis and programmed cell death. The polypeptide is Arabinogalactan peptide 3 (AGPEP3) (Oryza sativa subsp. japonica (Rice)).